The primary structure comprises 57 residues: Small ribosomal subunit protein bS21 (57 aa).

It belongs to the bacterial ribosomal protein bS21 family.

In Lysinibacillus sphaericus (strain C3-41), this protein is Small ribosomal subunit protein bS21.